The primary structure comprises 149 residues: Calmodulin (149 aa).

An N-acetylalanine modification is found at alanine 2. EF-hand domains follow at residues 8 to 43, 44 to 79, 81 to 116, and 117 to 149; these read EQIA…LGQN, PTEA…KMKD, DSEE…LGEK, and LTDE…MMAK. Positions 21, 23, 25, 27, 32, 57, 59, 61, 63, 68, 94, 96, 98, and 105 each coordinate Ca(2+). Residue lysine 116 is modified to N6,N6,N6-trimethyllysine. Residues aspartate 130, aspartate 132, aspartate 134, glutamine 136, and glutamate 141 each coordinate Ca(2+).

The protein belongs to the calmodulin family.

In terms of biological role, calmodulin mediates the control of a large number of enzymes, ion channels and other proteins by Ca(2+). Among the enzymes to be stimulated by the calmodulin-Ca(2+) complex are a number of protein kinases and phosphatases. The protein is Calmodulin of Triticum aestivum (Wheat).